Here is a 479-residue protein sequence, read N- to C-terminus: Hydrogenase-4 component D (479 aa).

15 helical membrane passes run asparagine 3–proline 23, tryptophan 30–tyrosine 50, valine 55–aspartate 75, leucine 80–leucine 100, alanine 117–glycine 137, alanine 168–leucine 188, leucine 208–alanine 228, threonine 238–alanine 258, valine 270–tyrosine 290, leucine 300–phenylalanine 320, isoleucine 330–leucine 350, leucine 369–phenylalanine 389, asparagine 390–tryptophan 410, isoleucine 411–isoleucine 431, and leucine 458–leucine 478.

The protein belongs to the complex I subunit 5 family.

It localises to the cell inner membrane. Possible component of hydrogenase 4. The sequence is that of Hydrogenase-4 component D from Escherichia coli (strain K12).